We begin with the raw amino-acid sequence, 1182 residues long: Rho GTPase-activating protein 20 (1182 aa).

Residues 1–40 (MEAMSPQQDALGAQPGRSSSLTGMSRIAGGPGTKKKMKTL) are disordered. At S46 the chain carries Phosphoserine. The region spanning 85-185 (TLLIDGPVEL…WLSLLQRYIA (101 aa)) is the PH domain. The 90-residue stretch at 194 to 283 (KSIPLKIFAK…TALLTQGSRD (90 aa)) folds into the Ras-associating domain. Residues 365 to 551 (VSLPDLCEND…FLIENCCRVF (187 aa)) form the Rho-GAP domain. A phosphoserine mark is found at S704 and S730. Disordered regions lie at residues 745–772 (QTQP…KRNT), 803–839 (VASY…QKSS), 935–955 (SYSS…SSQD), 982–1011 (TQRK…GQAS), 1074–1101 (LPSC…EGPG), and 1142–1182 (SGGQ…GTDI). Residues 758–772 (KQSSVTGTDVSKRNT) show a composition bias toward polar residues. The span at 811–824 (SQDHPRKQAFDADP) shows a compositional bias: basic and acidic residues.

Functionally, GTPase activator for the Rho-type GTPases by converting them to an inactive GDP-bound state. This Mus musculus (Mouse) protein is Rho GTPase-activating protein 20 (Arhgap20).